The following is a 405-amino-acid chain: MALQAASLVSSAFSVRKDGKLNASASSSFKESSLFGVSLSEQSKADFVSSSLRCKREQSLRNNKAIIRAQAIATSTPSVTKSSLDRKKTLRKGNVVVTGASSGLGLATAKALAETGKWHVIMACRDFLKAERAAQSAGMPKDSYTVMHLDLASLDSVRQFVDNFRRAEMPLDVLVCNAAVYQPTANQPTFTAEGFELSVGINHLGHFLLSRLLIDDLKNSDYPSKRLIIVGSITGNTNTLAGNVPPKANLGDLRGLAGGLNGLNSSAMIDGGDFVGAKAYKDSKVCNMLTMQEFHRRFHEDTGITFASLYPGCIATTGLFREHIPLFRTLFPPFQKYITKGYVSESEAGKRLAQVVADPSLTKSGVYWSWNKTSASFENQLSQEASDVEKARRVWEVSEKLVGLA.

The transit peptide at 1–69 (MALQAASLVS…LRNNKAIIRA (69 aa)) directs the protein to the chloroplast.

The protein belongs to the short-chain dehydrogenases/reductases (SDR) family. POR subfamily. Forms large complexes including TOC33, pPORA and OEP161 during pPORA import into plastids at the plastid envelope membrane. Interacts with CPP1 during plastid import. In terms of tissue distribution, expressed in young seedlings. Not detected in leaves.

It is found in the plastid. It localises to the chloroplast. It catalyses the reaction chlorophyllide a + NADP(+) = protochlorophyllide a + NADPH + H(+). Its pathway is porphyrin-containing compound metabolism; chlorophyll biosynthesis. Its function is as follows. Phototransformation of protochlorophyllide (Pchlide) to chlorophyllide (Chlide). PORA may also function as a photoprotectant during the transitory stage from dark to light. Functions in skotomorphogenesis, photomorphogenesis and throughout the plant life under specific light conditions. The protein is Protochlorophyllide reductase A, chloroplastic (PORA) of Arabidopsis thaliana (Mouse-ear cress).